The sequence spans 157 residues: NAD(P)H-quinone oxidoreductase subunit N (157 aa).

It belongs to the complex I NdhN subunit family. As to quaternary structure, NDH-1 can be composed of about 15 different subunits; different subcomplexes with different compositions have been identified which probably have different functions.

Its subcellular location is the cellular thylakoid membrane. It catalyses the reaction a plastoquinone + NADH + (n+1) H(+)(in) = a plastoquinol + NAD(+) + n H(+)(out). It carries out the reaction a plastoquinone + NADPH + (n+1) H(+)(in) = a plastoquinol + NADP(+) + n H(+)(out). Its function is as follows. NDH-1 shuttles electrons from an unknown electron donor, via FMN and iron-sulfur (Fe-S) centers, to quinones in the respiratory and/or the photosynthetic chain. The immediate electron acceptor for the enzyme in this species is believed to be plastoquinone. Couples the redox reaction to proton translocation, and thus conserves the redox energy in a proton gradient. Cyanobacterial NDH-1 also plays a role in inorganic carbon-concentration. This chain is NAD(P)H-quinone oxidoreductase subunit N, found in Picosynechococcus sp. (strain ATCC 27264 / PCC 7002 / PR-6) (Agmenellum quadruplicatum).